Here is a 410-residue protein sequence, read N- to C-terminus: NADH-quinone oxidoreductase subunit D (410 aa).

It belongs to the complex I 49 kDa subunit family. In terms of assembly, NDH-1 is composed of 14 different subunits. Subunits NuoB, C, D, E, F, and G constitute the peripheral sector of the complex.

The protein resides in the cell inner membrane. The enzyme catalyses a quinone + NADH + 5 H(+)(in) = a quinol + NAD(+) + 4 H(+)(out). Functionally, NDH-1 shuttles electrons from NADH, via FMN and iron-sulfur (Fe-S) centers, to quinones in the respiratory chain. The immediate electron acceptor for the enzyme in this species is believed to be ubiquinone. Couples the redox reaction to proton translocation (for every two electrons transferred, four hydrogen ions are translocated across the cytoplasmic membrane), and thus conserves the redox energy in a proton gradient. The chain is NADH-quinone oxidoreductase subunit D from Nitratiruptor sp. (strain SB155-2).